The following is a 181-amino-acid chain: Adenylate kinase (181 aa).

An ATP-binding site is contributed by 10–15; that stretch reads GAGKGT. The interval 30-59 is NMP; sequence STGDLFRKNIGDGTPLGLEAKRYLDAGDLV. AMP contacts are provided by residues threonine 31, arginine 36, 57-59, 85-88, and glutamine 92; these read DLV and GYPR. Residues 126 to 132 form an LID region; sequence GRGRADD. An ATP-binding site is contributed by arginine 127. AMP contacts are provided by arginine 129 and arginine 140. Residue glycine 166 coordinates ATP.

Belongs to the adenylate kinase family. As to quaternary structure, monomer.

The protein localises to the cytoplasm. The catalysed reaction is AMP + ATP = 2 ADP. It functions in the pathway purine metabolism; AMP biosynthesis via salvage pathway; AMP from ADP: step 1/1. Its function is as follows. Catalyzes the reversible transfer of the terminal phosphate group between ATP and AMP. Plays an important role in cellular energy homeostasis and in adenine nucleotide metabolism. The polypeptide is Adenylate kinase (Mycolicibacterium smegmatis (strain ATCC 700084 / mc(2)155) (Mycobacterium smegmatis)).